A 245-amino-acid chain; its full sequence is Alpha carbonic anhydrase 2 (245 aa).

A signal peptide spans 1 to 23 (MDKISIRCFIFLVLTSFVTTVSC). The Alpha-carbonic anhydrase domain maps to 37–245 (HEFSYEWNQE…THRYFLLFFT (209 aa)). The cysteines at positions 62 and 222 are disulfide-linked. N-linked (GlcNAc...) asparagine glycosylation occurs at Asn-95. His-103 serves as the catalytic Proton acceptor. Residue Asn-120 is glycosylated (N-linked (GlcNAc...) asparagine). Zn(2+) contacts are provided by His-130, His-132, and His-149. N-linked (GlcNAc...) asparagine glycosylation is present at Asn-156. Substrate is bound at residue 218–219 (TT).

The protein belongs to the alpha-class carbonic anhydrase family. It depends on Zn(2+) as a cofactor. N-glycosylated. Expressed in stems and roots.

It is found in the plastid. Its subcellular location is the chloroplast stroma. It carries out the reaction hydrogencarbonate + H(+) = CO2 + H2O. In terms of biological role, reversible hydration of carbon dioxide. This chain is Alpha carbonic anhydrase 2 (ACA2), found in Arabidopsis thaliana (Mouse-ear cress).